Consider the following 297-residue polypeptide: Ectoine dioxygenase (297 aa).

Gln-131 is a binding site for L-ectoine. Lys-137 contacts 2-oxoglutarate. His-148, Asp-150, and His-249 together coordinate Fe cation.

The protein belongs to the PhyH family. EctD subfamily. As to quaternary structure, homodimer. The cofactor is Fe(2+).

The enzyme catalyses L-ectoine + 2-oxoglutarate + O2 = 5-hydroxyectoine + succinate + CO2. Involved in the biosynthesis of 5-hydroxyectoine, called compatible solute, which helps organisms to survive extreme osmotic stress by acting as a highly soluble organic osmolyte. Catalyzes the 2-oxoglutarate-dependent selective hydroxylation of L-ectoine to yield (4S,5S)-5-hydroxyectoine. This is Ectoine dioxygenase from Streptomyces anulatus (Streptomyces chrysomallus).